The chain runs to 251 residues: Ubiquinone biosynthesis O-methyltransferase (251 aa).

Positions 36, 61, 82, and 124 each coordinate S-adenosyl-L-methionine.

The protein belongs to the methyltransferase superfamily. UbiG/COQ3 family.

The catalysed reaction is a 3-demethylubiquinol + S-adenosyl-L-methionine = a ubiquinol + S-adenosyl-L-homocysteine + H(+). It catalyses the reaction a 3-(all-trans-polyprenyl)benzene-1,2-diol + S-adenosyl-L-methionine = a 2-methoxy-6-(all-trans-polyprenyl)phenol + S-adenosyl-L-homocysteine + H(+). It functions in the pathway cofactor biosynthesis; ubiquinone biosynthesis. In terms of biological role, O-methyltransferase that catalyzes the 2 O-methylation steps in the ubiquinone biosynthetic pathway. The chain is Ubiquinone biosynthesis O-methyltransferase from Rickettsia akari (strain Hartford).